The primary structure comprises 218 residues: Peptide methionine sulfoxide reductase A2 (218 aa).

Positions 1–19 are enriched in polar residues; the sequence is MDSSLKTQEPQVVETSPSP. The disordered stretch occupies residues 1–30; it reads MDSSLKTQEPQVVETSPSPVAQEPPQVADK. Serine 205 is modified (phosphoserine).

This sequence belongs to the MsrA Met sulfoxide reductase family.

Its subcellular location is the cytoplasm. The protein localises to the cytosol. The enzyme catalyses L-methionyl-[protein] + [thioredoxin]-disulfide + H2O = L-methionyl-(S)-S-oxide-[protein] + [thioredoxin]-dithiol. The catalysed reaction is [thioredoxin]-disulfide + L-methionine + H2O = L-methionine (S)-S-oxide + [thioredoxin]-dithiol. Its activity is regulated as follows. Activated during dark in short day conditions. Catalyzes the reduction of methionine sulfoxide (MetSO) to methionine in proteins. Plays a protective role against oxidative stress by restoring activity to proteins that have been inactivated by methionine oxidation. Prevents cellular oxidative damage in long nights. MSRA family specifically reduces the MetSO S-enantiomer. The sequence is that of Peptide methionine sulfoxide reductase A2 (MRSA2) from Arabidopsis thaliana (Mouse-ear cress).